A 198-amino-acid chain; its full sequence is Small ribosomal subunit protein uS4 (198 aa).

The region spanning 91-154 (SRLDNVVYRL…KNLNIVQEAV (64 aa)) is the S4 RNA-binding domain.

The protein belongs to the universal ribosomal protein uS4 family. Part of the 30S ribosomal subunit. Contacts protein S5. The interaction surface between S4 and S5 is involved in control of translational fidelity.

Functionally, one of the primary rRNA binding proteins, it binds directly to 16S rRNA where it nucleates assembly of the body of the 30S subunit. In terms of biological role, with S5 and S12 plays an important role in translational accuracy. The polypeptide is Small ribosomal subunit protein uS4 (Onion yellows phytoplasma (strain OY-M)).